The chain runs to 641 residues: SUMO-activating enzyme subunit 2 (641 aa).

ATP contacts are provided by residues G24–G29, D48, N56–R59, K72, S95–I96, and D117–R122. 2 residues coordinate Zn(2+): C158 and C161. C173 (glycyl thioester intermediate) is an active-site residue. K190 participates in a covalent cross-link: Glycyl lysine isopeptide (Lys-Gly) (interchain with G-Cter in SUMO). Residue K236 forms a Glycyl lysine isopeptide (Lys-Gly) (interchain with G-Cter in SUMO1) linkage. Residues K257 and K275 each participate in a glycyl lysine isopeptide (Lys-Gly) (interchain with G-Cter in SUMO) cross-link. Residues C439 and C442 each coordinate Zn(2+). The interval G546–D641 is disordered. Positions P556–A579 are enriched in polar residues. Over residues Q582 to S594 the composition is skewed to acidic residues. Residues K610, K612, and K623 each participate in a glycyl lysine isopeptide (Lys-Gly) (interchain with G-Cter in SUMO) cross-link. The segment covering P630–D641 has biased composition (acidic residues).

It belongs to the ubiquitin-activating E1 family. As to quaternary structure, heterodimer of sae1 and uba2/sae2. The heterodimer corresponds to the two domains that are encoded on a single polypeptide chain in ubiquitin-activating enzyme E1. Interacts with ube2i. In terms of processing, sumoylated with SUMO1 and SUMO2/3 and by UBC9. Sumoylation at Lys-236 inhibits enzymatic activity. Sumoylation at the C-terminal lysine cluster plays an essential role in nuclear trafficking.

Its subcellular location is the cytoplasm. It is found in the nucleus. The protein operates within protein modification; protein sumoylation. Its function is as follows. The heterodimer acts as an E1 ligase for sumo1, sumo2, and sumo3. It mediates ATP-dependent activation of sumo proteins followed by formation of a thioester bond between a sumo protein and a conserved active site cysteine residue on uba2/sae2. This Xenopus tropicalis (Western clawed frog) protein is SUMO-activating enzyme subunit 2 (uba2).